Here is a 227-residue protein sequence, read N- to C-terminus: Probable cytokinin riboside 5'-monophosphate phosphoribohydrolase LOGL9 (227 aa).

Polar residues predominate over residues 1–15; it reads MYISSPHTSHFTSID. A disordered region spans residues 1 to 26; the sequence is MYISSPHTSHFTSIDRSPAVVSESDR. Substrate is bound by residues Glu117, 135–136, and 152–158; these read RK and GYGTLEE.

It belongs to the LOG family. As to expression, expressed in roots, leaves and stems.

It carries out the reaction N(6)-(dimethylallyl)adenosine 5'-phosphate + H2O = N(6)-dimethylallyladenine + D-ribose 5-phosphate. The enzyme catalyses 9-ribosyl-trans-zeatin 5'-phosphate + H2O = trans-zeatin + D-ribose 5-phosphate. In terms of biological role, cytokinin-activating enzyme working in the direct activation pathway. Phosphoribohydrolase that converts inactive cytokinin nucleotides to the biologically active free-base forms. This chain is Probable cytokinin riboside 5'-monophosphate phosphoribohydrolase LOGL9 (LOGL9), found in Oryza sativa subsp. japonica (Rice).